The sequence spans 490 residues: GPI-anchored wall transfer protein 1 (490 aa).

The Lumenal segment spans residues Met1–Ser19. Residues Ile20 to Leu40 form a helical membrane-spanning segment. Topologically, residues Lys41–Gln54 are cytoplasmic. Residues Tyr55–Ser75 form a helical membrane-spanning segment. Residue Glu76 is a topological domain, lumenal. The helical transmembrane segment at Pro77–Phe97 threads the bilayer. The Cytoplasmic portion of the chain corresponds to Thr98–Ala128. The helical transmembrane segment at Tyr129 to Phe149 threads the bilayer. The Lumenal portion of the chain corresponds to Pro150–Glu157. A helical membrane pass occupies residues Thr158 to Val178. At Ser179–Ala199 the chain is on the cytoplasmic side. The helical transmembrane segment at Phe200–Val220 threads the bilayer. Residues Lys221–Glu231 are Lumenal-facing. Residues Tyr232 to Ile252 form a helical membrane-spanning segment. The Cytoplasmic portion of the chain corresponds to Asp253–Arg257. Residues Met258–Lys278 form a helical membrane-spanning segment. Topologically, residues Asp279 to Gly301 are lumenal. A helical transmembrane segment spans residues Ile302–Leu322. The Cytoplasmic segment spans residues Leu323–Val356. A helical membrane pass occupies residues Thr357 to Phe377. The Lumenal portion of the chain corresponds to Gln378–Asn390. The helical transmembrane segment at Leu391–Thr411 threads the bilayer. At Asp412 to Gly435 the chain is on the cytoplasmic side. A helical membrane pass occupies residues Leu436–Ile456. Residues Asp457–Pro460 are Lumenal-facing. A helical transmembrane segment spans residues Leu461–Leu481. Residues Tyr482–Leu490 lie on the Cytoplasmic side of the membrane.

It belongs to the PIGW family.

The protein localises to the endoplasmic reticulum membrane. The protein operates within glycolipid biosynthesis; glycosylphosphatidylinositol-anchor biosynthesis. Its function is as follows. Probable acetyltransferase, which acetylates the inositol ring of phosphatidylinositol during biosynthesis of GPI-anchor. Acetylation during GPI-anchor biosynthesis is not essential for the subsequent mannosylation and is usually removed soon after the attachment of GPIs to proteins. The protein is GPI-anchored wall transfer protein 1 (GWT1) of Saccharomyces cerevisiae (strain ATCC 204508 / S288c) (Baker's yeast).